Consider the following 383-residue polypeptide: Nuclear hormone receptor family member nhr-217 (383 aa).

A DNA-binding region (nuclear receptor) is located at residues Ile-53 to Gln-127. NR C4-type zinc fingers lie at residues Cys-56–Cys-77 and Cys-93–Cys-109. Residues Ile-172–Phe-383 form the NR LBD domain.

This sequence belongs to the nuclear hormone receptor family.

Its subcellular location is the nucleus. Functionally, orphan nuclear receptor. The protein is Nuclear hormone receptor family member nhr-217 (nhr-217) of Caenorhabditis elegans.